A 157-amino-acid chain; its full sequence is Crossover junction endodeoxyribonuclease RuvC (157 aa).

Residues Asp-7, Glu-66, and Asp-139 contribute to the active site. Residues Asp-7, Glu-66, and Asp-139 each contribute to the Mg(2+) site.

It belongs to the RuvC family. As to quaternary structure, homodimer which binds Holliday junction (HJ) DNA. The HJ becomes 2-fold symmetrical on binding to RuvC with unstacked arms; it has a different conformation from HJ DNA in complex with RuvA. In the full resolvosome a probable DNA-RuvA(4)-RuvB(12)-RuvC(2) complex forms which resolves the HJ. It depends on Mg(2+) as a cofactor.

Its subcellular location is the cytoplasm. It carries out the reaction Endonucleolytic cleavage at a junction such as a reciprocal single-stranded crossover between two homologous DNA duplexes (Holliday junction).. Its function is as follows. The RuvA-RuvB-RuvC complex processes Holliday junction (HJ) DNA during genetic recombination and DNA repair. Endonuclease that resolves HJ intermediates. Cleaves cruciform DNA by making single-stranded nicks across the HJ at symmetrical positions within the homologous arms, yielding a 5'-phosphate and a 3'-hydroxyl group; requires a central core of homology in the junction. The consensus cleavage sequence is 5'-(A/T)TT(C/G)-3'. Cleavage occurs on the 3'-side of the TT dinucleotide at the point of strand exchange. HJ branch migration catalyzed by RuvA-RuvB allows RuvC to scan DNA until it finds its consensus sequence, where it cleaves and resolves the cruciform DNA. This is Crossover junction endodeoxyribonuclease RuvC from Helicobacter pylori (strain P12).